The chain runs to 551 residues: Terpene synthase 10 (551 aa).

3 residues coordinate Mg(2+): aspartate 303, aspartate 307, and glutamate 455. Positions 303–307 (DDIYD) match the DDXXD motif motif.

This sequence belongs to the terpene synthase family. Mg(2+) serves as cofactor.

Its function is as follows. Catalyzes the cyclization of farnesyl diphosphate to sesquiterpene olefins. This chain is Terpene synthase 10 (TPS10), found in Ricinus communis (Castor bean).